The following is a 178-amino-acid chain: Interleukin-10 (178 aa).

A signal peptide spans 1 to 18; the sequence is MHSSALLCCLVFLTGVRA. 2 cysteine pairs are disulfide-bonded: Cys30–Cys126 and Cys80–Cys132. N-linked (GlcNAc...) asparagine glycosylation occurs at Asn134.

The protein belongs to the IL-10 family. In terms of assembly, homodimer. Interacts with IL10RA and IL10RB.

It is found in the secreted. Major immune regulatory cytokine that acts on many cells of the immune system where it has profound anti-inflammatory functions, limiting excessive tissue disruption caused by inflammation. Mechanistically, IL10 binds to its heterotetrameric receptor comprising IL10RA and IL10RB leading to JAK1 and STAT2-mediated phosphorylation of STAT3. In turn, STAT3 translocates to the nucleus where it drives expression of anti-inflammatory mediators. Targets antigen-presenting cells (APCs) such as macrophages and monocytes and inhibits their release of pro-inflammatory cytokines including granulocyte-macrophage colony-stimulating factor /GM-CSF, granulocyte colony-stimulating factor/G-CSF, IL-1 alpha, IL-1 beta, IL-6, IL-8 and TNF-alpha. Also interferes with antigen presentation by reducing the expression of MHC-class II and co-stimulatory molecules, thereby inhibiting their ability to induce T cell activation. In addition, controls the inflammatory response of macrophages by reprogramming essential metabolic pathways including mTOR signaling. The chain is Interleukin-10 (IL10) from Saimiri sciureus (Common squirrel monkey).